The sequence spans 122 residues: Histone H2B.1 (122 aa).

The segment covering 1–10 has biased composition (low complexity); the sequence is MAPKKAPAAA. The tract at residues 1-28 is disordered; the sequence is MAPKKAPAAAAEKKVKKAPTTEKKNKKK. At alanine 2 the chain carries N,N,N-trimethylalanine. 2 positions are modified to N6-acetyllysine: lysine 5 and lysine 42. Residue lysine 116 forms a Glycyl lysine isopeptide (Lys-Gly) (interchain with G-Cter in ubiquitin) linkage.

Belongs to the histone H2B family. As to quaternary structure, the nucleosome is a histone octamer containing two molecules each of H2A, H2B, H3 and H4 assembled in one H3-H4 heterotetramer and two H2A-H2B heterodimers. The octamer wraps approximately 147 bp of DNA. In terms of processing, acetylation occurs almost exclusively in the MAC. Post-translationally, monoubiquitination to form H2BK115ub1 gives a specific tag for epigenetic transcriptional activation and is also prerequisite for H3K4me and H3K79me formation.

It localises to the nucleus. The protein resides in the chromosome. Functionally, core component of nucleosome. Nucleosomes wrap and compact DNA into chromatin, limiting DNA accessibility to the cellular machineries which require DNA as a template. Histones thereby play a central role in transcription regulation, DNA repair, DNA replication and chromosomal stability. DNA accessibility is regulated via a complex set of post-translational modifications of histones, also called histone code, and nucleosome remodeling. This is Histone H2B.1 (HTB1) from Tetrahymena thermophila (strain SB210).